The primary structure comprises 461 residues: Porin AaxA (461 aa).

The first 22 residues, 1–22, serve as a signal peptide directing secretion; it reads MSFRSVLLTALLSLSFTTTMQA.

The protein belongs to the OprB family.

It is found in the cell outer membrane. Its function is as follows. Facilitates L-arginine uptake, as part of the AaxABC system. The arginine uptake by the bacterium in the macrophage may be a virulence factor against the host innate immune response. This Chlamydia trachomatis serovar A (strain ATCC VR-571B / DSM 19440 / HAR-13) protein is Porin AaxA (aaxA).